Consider the following 508-residue polypeptide: Steroid 17-alpha-hydroxylase/17,20 lyase (508 aa).

Substrate is bound at residue Asn202. Position 442 (Cys442) interacts with heme.

It belongs to the cytochrome P450 family. Heme serves as cofactor.

Its subcellular location is the endoplasmic reticulum membrane. It is found in the microsome membrane. The enzyme catalyses a C21-steroid + reduced [NADPH--hemoprotein reductase] + O2 = a 17alpha-hydroxy-C21-steroid + oxidized [NADPH--hemoprotein reductase] + H2O + H(+). It catalyses the reaction progesterone + reduced [NADPH--hemoprotein reductase] + O2 = 17alpha-hydroxyprogesterone + oxidized [NADPH--hemoprotein reductase] + H2O + H(+). It carries out the reaction pregnenolone + reduced [NADPH--hemoprotein reductase] + O2 = 17alpha-hydroxypregnenolone + oxidized [NADPH--hemoprotein reductase] + H2O + H(+). The catalysed reaction is 17alpha-hydroxyprogesterone + reduced [NADPH--hemoprotein reductase] + O2 = androst-4-ene-3,17-dione + acetate + oxidized [NADPH--hemoprotein reductase] + H2O + 2 H(+). The enzyme catalyses 17alpha-hydroxyprogesterone + reduced [NADPH--hemoprotein reductase] + O2 = 16alpha,17alpha-dihydroxyprogesterone + oxidized [NADPH--hemoprotein reductase] + H2O + H(+). It catalyses the reaction 16alpha,17alpha-dihydroxyprogesterone + reduced [NADPH--hemoprotein reductase] + O2 = 6beta,16alpha,17alpha-trihydroxyprogesterone + oxidized [NADPH--hemoprotein reductase] + H2O + H(+). It carries out the reaction 17alpha-hydroxypregnenolone + reduced [NADPH--hemoprotein reductase] + O2 = 3beta-hydroxyandrost-5-en-17-one + acetate + oxidized [NADPH--hemoprotein reductase] + H2O + 2 H(+). The catalysed reaction is 16alpha,17alpha-dihydroxypregnenolone + reduced [NADPH--hemoprotein reductase] + O2 = 3beta,16alpha-dihydroxy-androst-5-en-17-one + acetate + oxidized [NADPH--hemoprotein reductase] + H2O + 2 H(+). The enzyme catalyses 3beta-hydroxyandrost-5-en-17-one + reduced [NADPH--hemoprotein reductase] + O2 = 3beta,16alpha-dihydroxy-androst-5-en-17-one + oxidized [NADPH--hemoprotein reductase] + H2O + H(+). It catalyses the reaction androst-4-ene-3,17-dione + reduced [NADPH--hemoprotein reductase] + O2 = 16alpha-hydroxyandrost-4-ene-3,17-dione + oxidized [NADPH--hemoprotein reductase] + H2O + H(+). Its pathway is steroid hormone biosynthesis. It participates in steroid biosynthesis; glucocorticoid biosynthesis. With respect to regulation, regulated predominantly by intracellular cAMP levels. The 17,20-lyase activity is stimulated by cytochrome b5, which acts as an allosteric effector increasing the Vmax of the lyase activity. A cytochrome P450 monooxygenase involved in corticoid and androgen biosynthesis. Catalyzes 17-alpha hydroxylation of C21 steroids, which is common for both pathways. A second oxidative step, required only for androgen synthesis, involves an acyl-carbon cleavage. The 17-alpha hydroxy intermediates, as part of adrenal glucocorticoids biosynthesis pathway, are precursors of cortisol. Hydroxylates steroid hormones, pregnenolone and progesterone to form 17-alpha hydroxy metabolites, followed by the cleavage of the C17-C20 bond to form C19 steroids, dehydroepiandrosterone (DHEA) and androstenedione. Has 16-alpha hydroxylase activity. Catalyzes 16-alpha hydroxylation of 17-alpha hydroxy pregnenolone, followed by the cleavage of the C17-C20 bond to form 16-alpha-hydroxy DHEA. Also 16-alpha hydroxylates androgens, relevant for estriol synthesis. Mechanistically, uses molecular oxygen inserting one oxygen atom into a substrate, and reducing the second into a water molecule, with two electrons provided by NADPH via cytochrome P450 reductase (CPR; NADPH-ferrihemoprotein reductase). The protein is Steroid 17-alpha-hydroxylase/17,20 lyase (CYP17A1) of Macaca fascicularis (Crab-eating macaque).